A 182-amino-acid polypeptide reads, in one-letter code: N-alpha-acetyltransferase daf-31 (182 aa).

Residues 1-152 (MNIRCARVDD…DAYAMRRDLA (152 aa)) enclose the N-acetyltransferase domain. Residues 162-182 (PADREAYTTAKTTDDKKKNRS) are disordered.

This sequence belongs to the acetyltransferase family. ARD1 subfamily. In terms of assembly, component of the N-terminal acetyltransferase A (NatA) complex. Expressed in head and tail hypodermal cells, hypodermal seam cells, pharynx, intestine and head and tail neurons.

The catalysed reaction is N-terminal glycyl-[protein] + acetyl-CoA = N-terminal N(alpha)-acetylglycyl-[protein] + CoA + H(+). The enzyme catalyses N-terminal L-alanyl-[protein] + acetyl-CoA = N-terminal N(alpha)-acetyl-L-alanyl-[protein] + CoA + H(+). It catalyses the reaction N-terminal L-seryl-[protein] + acetyl-CoA = N-terminal N(alpha)-acetyl-L-seryl-[protein] + CoA + H(+). It carries out the reaction N-terminal L-valyl-[protein] + acetyl-CoA = N-terminal N(alpha)-acetyl-L-valyl-[protein] + CoA + H(+). The catalysed reaction is N-terminal L-cysteinyl-[protein] + acetyl-CoA = N-terminal N(alpha)-acetyl-L-cysteinyl-[protein] + CoA + H(+). The enzyme catalyses N-terminal L-threonyl-[protein] + acetyl-CoA = N-terminal N(alpha)-acetyl-L-threonyl-[protein] + CoA + H(+). Catalytic subunit of the N-terminal acetyltransferase A (NatA) complex which displays alpha (N-terminal) acetyltransferase activity. Plays a role in regulating larval development, metabolism and longevity. Functions downstream or alongside daf-3, daf-12 and daf-16 in the dauer formation pathway. Functions upstream of daf-15 to enable animal development. This is N-alpha-acetyltransferase daf-31 from Caenorhabditis elegans.